A 445-amino-acid chain; its full sequence is tRNA-2-methylthio-N(6)-dimethylallyladenosine synthase (445 aa).

The MTTase N-terminal domain maps to 2 to 117; the sequence is QGLYIKSYGC…LPELIVKARK (116 aa). [4Fe-4S] cluster is bound by residues Cys-11, Cys-47, Cys-80, Cys-157, Cys-161, and Cys-164. Positions 143 to 374 constitute a Radical SAM core domain; that stretch reads KNQKVSAFIS…QELVHKQQLE (232 aa). A TRAM domain is found at 377-441; the sequence is KKMIGETHPV…KNHLTGIIPH (65 aa).

This sequence belongs to the methylthiotransferase family. MiaB subfamily. As to quaternary structure, monomer. Requires [4Fe-4S] cluster as cofactor.

The protein resides in the cytoplasm. It carries out the reaction N(6)-dimethylallyladenosine(37) in tRNA + (sulfur carrier)-SH + AH2 + 2 S-adenosyl-L-methionine = 2-methylsulfanyl-N(6)-dimethylallyladenosine(37) in tRNA + (sulfur carrier)-H + 5'-deoxyadenosine + L-methionine + A + S-adenosyl-L-homocysteine + 2 H(+). In terms of biological role, catalyzes the methylthiolation of N6-(dimethylallyl)adenosine (i(6)A), leading to the formation of 2-methylthio-N6-(dimethylallyl)adenosine (ms(2)i(6)A) at position 37 in tRNAs that read codons beginning with uridine. This chain is tRNA-2-methylthio-N(6)-dimethylallyladenosine synthase, found in Ehrlichia ruminantium (strain Gardel).